The sequence spans 729 residues: Fatty acid oxidation complex subunit alpha (729 aa).

The enoyl-CoA hydratase/isomerase stretch occupies residues 1–189; that stretch reads MLYKGDTLYL…KIGLVDGVVK (189 aa). Substrate is bound at residue Asp296. The segment at 311 to 729 is 3-hydroxyacyl-CoA dehydrogenase; the sequence is ETPKQAAVLG…ARPVGSLKTA (419 aa). NAD(+) is bound by residues Met324, Asp343, 400–402, Lys407, and Ser429; that span reads VVE. Catalysis depends on His450, which acts as the For 3-hydroxyacyl-CoA dehydrogenase activity. Position 453 (Asn453) interacts with NAD(+). Residues Asn500 and Tyr660 each coordinate substrate. Positions 708–729 are disordered; sequence RHNEPYYPPVEPARPVGSLKTA.

In the N-terminal section; belongs to the enoyl-CoA hydratase/isomerase family. It in the C-terminal section; belongs to the 3-hydroxyacyl-CoA dehydrogenase family. In terms of assembly, heterotetramer of two alpha chains (FadB) and two beta chains (FadA).

It carries out the reaction a (3S)-3-hydroxyacyl-CoA + NAD(+) = a 3-oxoacyl-CoA + NADH + H(+). It catalyses the reaction a (3S)-3-hydroxyacyl-CoA = a (2E)-enoyl-CoA + H2O. The catalysed reaction is a 4-saturated-(3S)-3-hydroxyacyl-CoA = a (3E)-enoyl-CoA + H2O. The enzyme catalyses (3S)-3-hydroxybutanoyl-CoA = (3R)-3-hydroxybutanoyl-CoA. It carries out the reaction a (3Z)-enoyl-CoA = a 4-saturated (2E)-enoyl-CoA. It catalyses the reaction a (3E)-enoyl-CoA = a 4-saturated (2E)-enoyl-CoA. It participates in lipid metabolism; fatty acid beta-oxidation. Functionally, involved in the aerobic and anaerobic degradation of long-chain fatty acids via beta-oxidation cycle. Catalyzes the formation of 3-oxoacyl-CoA from enoyl-CoA via L-3-hydroxyacyl-CoA. It can also use D-3-hydroxyacyl-CoA and cis-3-enoyl-CoA as substrate. This Salmonella typhimurium (strain LT2 / SGSC1412 / ATCC 700720) protein is Fatty acid oxidation complex subunit alpha.